Consider the following 248-residue polypeptide: Proteasome subunit alpha (248 aa).

Belongs to the peptidase T1A family. The 20S proteasome core is composed of 14 alpha and 14 beta subunits that assemble into four stacked heptameric rings, resulting in a barrel-shaped structure. The two inner rings, each composed of seven catalytic beta subunits, are sandwiched by two outer rings, each composed of seven alpha subunits. The catalytic chamber with the active sites is on the inside of the barrel. Has a gated structure, the ends of the cylinder being occluded by the N-termini of the alpha-subunits. Is capped at one or both ends by the proteasome regulatory ATPase, PAN.

It is found in the cytoplasm. The formation of the proteasomal ATPase PAN-20S proteasome complex, via the docking of the C-termini of PAN into the intersubunit pockets in the alpha-rings, triggers opening of the gate for substrate entry. Interconversion between the open-gate and close-gate conformations leads to a dynamic regulation of the 20S proteasome proteolysis activity. Its function is as follows. Component of the proteasome core, a large protease complex with broad specificity involved in protein degradation. This Methanothermobacter thermautotrophicus (strain ATCC 29096 / DSM 1053 / JCM 10044 / NBRC 100330 / Delta H) (Methanobacterium thermoautotrophicum) protein is Proteasome subunit alpha.